The following is a 352-amino-acid chain: tRNA (guanine-N(1)-)-methyltransferase (352 aa).

Residues Gly-109 and 129 to 134 each bind S-adenosyl-L-methionine; that span reads IGDYVL.

This sequence belongs to the RNA methyltransferase TrmD family. Homodimer.

The protein localises to the cytoplasm. It catalyses the reaction guanosine(37) in tRNA + S-adenosyl-L-methionine = N(1)-methylguanosine(37) in tRNA + S-adenosyl-L-homocysteine + H(+). Functionally, specifically methylates guanosine-37 in various tRNAs. This chain is tRNA (guanine-N(1)-)-methyltransferase, found in Chlamydia trachomatis serovar A (strain ATCC VR-571B / DSM 19440 / HAR-13).